Consider the following 906-residue polypeptide: Protein transport protein SEC24-2 (906 aa).

Residues cysteine 222, cysteine 225, cysteine 244, and cysteine 247 each coordinate Zn(2+). Positions cysteine 222–cysteine 247 are zinc finger-like.

Belongs to the SEC23/SEC24 family. SEC24 subfamily. In terms of assembly, the COPII coat is composed of at least 5 proteins: the SEC23/24 complex, the SEC13/31 complex, and the protein SAR1. Golgi apparatus membrane; Peripheral membrane protein; Cytoplasmic side.

It is found in the cytoplasm. The protein resides in the cytoplasmic vesicle. Its subcellular location is the COPII-coated vesicle membrane. The protein localises to the endoplasmic reticulum membrane. It localises to the golgi apparatus membrane. Functionally, component of the coat protein complex II (COPII) which promotes the formation of transport vesicles from the endoplasmic reticulum (ER). The coat has two main functions, the physical deformation of the endoplasmic reticulum membrane into vesicles and the selection of cargo molecules. The protein is Protein transport protein SEC24-2 (SEC242) of Candida glabrata (strain ATCC 2001 / BCRC 20586 / JCM 3761 / NBRC 0622 / NRRL Y-65 / CBS 138) (Yeast).